Consider the following 169-residue polypeptide: Myosin regulatory light chain 11 (169 aa).

At Ala-2 the chain carries N,N,N-trimethylalanine. 2 positions are modified to phosphoserine: Ser-15 and Ser-16. 2 positions are modified to phosphothreonine: Thr-25 and Thr-35. Residues 25–60 (TQIQEFKEAFTVIDQNRDGIIDKEDLRDTFAAMGRL) enclose the EF-hand 1 domain. Asp-38, Asn-40, Asp-42, and Asp-49 together coordinate Ca(2+). The residue at position 75 (Ser-75) is a Phosphoserine. 2 EF-hand domains span residues 95–130 (DPEDVITGAFKVLDPEGKGTIKKQFLEELLTTQCDR) and 131–166 (FSQEEIKNMWAAFPPDVGGNVDYKNICYVITHGDAK). Thr-101 carries the phosphothreonine modification.

Myosin is a hexamer of 2 heavy chains and 4 light chains.

Functionally, myosin regulatory subunit that plays an essential to maintain muscle integrity during early development. Plays a role in muscle contraction. The sequence is that of Myosin regulatory light chain 11 (Myl11) from Rattus norvegicus (Rat).